Here is a 151-residue protein sequence, read N- to C-terminus: Ribonuclease H (151 aa).

The RNase H type-1 domain maps to 1 to 141; sequence MKHVDIFTDG…ADELARRGME (141 aa). Mg(2+) is bound by residues D9, E47, D69, and D133.

Belongs to the RNase H family. Monomer. The cofactor is Mg(2+).

Its subcellular location is the cytoplasm. The catalysed reaction is Endonucleolytic cleavage to 5'-phosphomonoester.. In terms of biological role, endonuclease that specifically degrades the RNA of RNA-DNA hybrids. This is Ribonuclease H from Rhizobium etli (strain ATCC 51251 / DSM 11541 / JCM 21823 / NBRC 15573 / CFN 42).